Consider the following 128-residue polypeptide: Fluoride-specific ion channel FluC (128 aa).

Helical transmembrane passes span 5–25 (IVAIFVGAGLGALLRWFLSIG), 35–55 (LGTLASNLIGGYLIGIAVVAF), 67–87 (LFVITGFMGGLTTFSTYSVEV), and 96–116 (FGWALAVAALHLIGSFTLTGL). Na(+) contacts are provided by Gly-75 and Thr-78.

This sequence belongs to the fluoride channel Fluc/FEX (TC 1.A.43) family.

It localises to the cell inner membrane. The enzyme catalyses fluoride(in) = fluoride(out). Na(+) is not transported, but it plays an essential structural role and its presence is essential for fluoride channel function. Fluoride-specific ion channel. Important for reducing fluoride concentration in the cell, thus reducing its toxicity. The polypeptide is Fluoride-specific ion channel FluC (Burkholderia pseudomallei (strain 1106a)).